Consider the following 262-residue polypeptide: Dimeric xanthone biosynthesis cluster protein R11 (262 aa).

Residues 69 to 160 (IADLLFYTKT…PQLFKHLNDE (92 aa)) form a hemerythrin-like region.

It functions in the pathway secondary metabolite biosynthesis. In terms of biological role, part of the gene cluster that mediates the biosynthesis of the dimeric xanthones cryptosporioptides. The pathway begins with the synthesis of atrochrysone thioester by the polyketide synthase dmx-nrPKS. The atrochrysone carboxyl ACP thioesterase dmxR1 then breaks the thioester bond and releases the atrochrysone carboxylic acid from dmx-nrPKS. Atrochrysone carboxylic acid is decarboxylated by the decarboxylase dmxR15, and oxidized by the anthrone oxygenase dmxR16 to yield emodin. Emodin is then reduced to emodin hydroquinone by the oxidoreductase dmxR7. A-ring reduction by the short chain dehydrogenase dmxR18, dehydration by the scytalone dehydratase-like protein dmxR17 and probable spontaneous re-oxidation, results in overall deoxygenation to chrysophanol. Baeyer-Villiger oxidation by the Baeyer-Villiger monooxygenase (BVMO) dmxR6 then yields monodictylactone in equilibrium with monodictyphenone. In the case of the cryptosporioptides biosynthesis, monodictylactone is reduced at C-12 to an alcohol (by the short chain dehydrogenases dmxR12 or dmxR8) and hydroxylated at C-5 by dmxR9, yielding the electron-rich aromatic which could eliminate H(2)O to form the ortho-quinonemethide, followed by tautomerisation to paraquinone and complete the formal reduction to produce the 10-methylgroup. Conjugate addition of C-4a-OH to the resulting paraquinone by the monooxygenase dmxR10 then gives cyclohexadienone, which is then reduced at C-5 by the short chain dehydrogenase dmxR3 to give the dihydroxanthone. The 6,7-epoxide in the cryptosporioptides could be introduced by the cytochrome P450 monooxygenase dmxL3. The highly reducing PKS dmxL2 manufactures butyrate, which is further carboxylated by dmxL1 to form ethylmalonate. It is not yet clear whether the carboxylation occurs while the butyrate is attached to the ACP of dmxL2, but this unusual fungal metabolite could then be esterified to O-5 by the O-acetyltransferase dmxR13. Finally, dimerization performed by dmxR5 gives the observed dimers cryptosporioptides A, B and C as the final products of the pathway. The polypeptide is Dimeric xanthone biosynthesis cluster protein R11 (Cryptosporiopsis sp. (strain 8999)).